Consider the following 176-residue polypeptide: Translation initiation factor IF-3 (176 aa).

This sequence belongs to the IF-3 family. In terms of assembly, monomer.

The protein localises to the cytoplasm. In terms of biological role, IF-3 binds to the 30S ribosomal subunit and shifts the equilibrium between 70S ribosomes and their 50S and 30S subunits in favor of the free subunits, thus enhancing the availability of 30S subunits on which protein synthesis initiation begins. This chain is Translation initiation factor IF-3, found in Rippkaea orientalis (strain PCC 8801 / RF-1) (Cyanothece sp. (strain PCC 8801)).